A 329-amino-acid polypeptide reads, in one-letter code: Ketol-acid reductoisomerase (NADP(+)) (329 aa).

The KARI N-terminal Rossmann domain maps to methionine 1–threonine 181. NADP(+) is bound by residues tyrosine 24–glutamine 27, arginine 47, and aspartate 82–glutamine 85. Histidine 107 is a catalytic residue. Position 133 (glycine 133) interacts with NADP(+). The KARI C-terminal knotted domain occupies threonine 182–leucine 327. Positions 190, 194, 226, and 230 each coordinate Mg(2+). Serine 251 contacts substrate.

The protein belongs to the ketol-acid reductoisomerase family. Mg(2+) serves as cofactor.

The catalysed reaction is (2R)-2,3-dihydroxy-3-methylbutanoate + NADP(+) = (2S)-2-acetolactate + NADPH + H(+). It catalyses the reaction (2R,3R)-2,3-dihydroxy-3-methylpentanoate + NADP(+) = (S)-2-ethyl-2-hydroxy-3-oxobutanoate + NADPH + H(+). The protein operates within amino-acid biosynthesis; L-isoleucine biosynthesis; L-isoleucine from 2-oxobutanoate: step 2/4. Its pathway is amino-acid biosynthesis; L-valine biosynthesis; L-valine from pyruvate: step 2/4. Involved in the biosynthesis of branched-chain amino acids (BCAA). Catalyzes an alkyl-migration followed by a ketol-acid reduction of (S)-2-acetolactate (S2AL) to yield (R)-2,3-dihydroxy-isovalerate. In the isomerase reaction, S2AL is rearranged via a Mg-dependent methyl migration to produce 3-hydroxy-3-methyl-2-ketobutyrate (HMKB). In the reductase reaction, this 2-ketoacid undergoes a metal-dependent reduction by NADPH to yield (R)-2,3-dihydroxy-isovalerate. The protein is Ketol-acid reductoisomerase (NADP(+)) of Oleidesulfovibrio alaskensis (strain ATCC BAA-1058 / DSM 17464 / G20) (Desulfovibrio alaskensis).